A 299-amino-acid polypeptide reads, in one-letter code: Zinc finger protein-like 1 homolog (299 aa).

Residues 1–43 form a B box-type; degenerate zinc finger; sequence MGLCKCPKRLVTNQFCFEHRVNVCEHCMVQSHPKCIVQSYLQW. The RING-type; atypical zinc finger occupies 53–101; that stretch reads CTLCGTTLEQGDCVRLVCYHVFHWDCLNARQAALPANTAPRGHQCPACS. The segment at 200 to 231 is disordered; it reads AGDYASSRRPLLPRQSPIGGTDRDDNKYQRRT. S215 carries the post-translational modification Phosphoserine. Residues 256–276 form a helical membrane-spanning segment; it reads WFLVTAGILAFVLFVYLMAWL.

The protein belongs to the ZFPL1 family.

Its subcellular location is the membrane. This Drosophila melanogaster (Fruit fly) protein is Zinc finger protein-like 1 homolog.